A 155-amino-acid polypeptide reads, in one-letter code: 2-C-methyl-D-erythritol 2,4-cyclodiphosphate synthase (155 aa).

Positions 10, 12, and 46 each coordinate a divalent metal cation. 10–12 (DSH) contributes to the 4-CDP-2-C-methyl-D-erythritol 2-phosphate binding site. 4-CDP-2-C-methyl-D-erythritol 2-phosphate contacts are provided by residues 60-62 (DIG), 65-69 (FDEND), and Lys140.

It belongs to the IspF family. As to quaternary structure, homotrimer. A divalent metal cation is required as a cofactor.

It catalyses the reaction 4-CDP-2-C-methyl-D-erythritol 2-phosphate = 2-C-methyl-D-erythritol 2,4-cyclic diphosphate + CMP. The protein operates within isoprenoid biosynthesis; isopentenyl diphosphate biosynthesis via DXP pathway; isopentenyl diphosphate from 1-deoxy-D-xylulose 5-phosphate: step 4/6. Functionally, involved in the biosynthesis of isopentenyl diphosphate (IPP) and dimethylallyl diphosphate (DMAPP), two major building blocks of isoprenoid compounds. Catalyzes the conversion of 4-diphosphocytidyl-2-C-methyl-D-erythritol 2-phosphate (CDP-ME2P) to 2-C-methyl-D-erythritol 2,4-cyclodiphosphate (ME-CPP) with a corresponding release of cytidine 5-monophosphate (CMP). The polypeptide is 2-C-methyl-D-erythritol 2,4-cyclodiphosphate synthase (Mycoplasmoides gallisepticum (strain R(low / passage 15 / clone 2)) (Mycoplasma gallisepticum)).